A 181-amino-acid chain; its full sequence is RNA pyrophosphohydrolase (181 aa).

The Nudix hydrolase domain maps to 6–150 (GYRPNVGIII…KCEVYRCALK (145 aa)). The Nudix box motif lies at 38–59 (GGIKEGETPEQAMYRELYEEVG).

The protein belongs to the Nudix hydrolase family. RppH subfamily. It depends on a divalent metal cation as a cofactor.

In terms of biological role, accelerates the degradation of transcripts by removing pyrophosphate from the 5'-end of triphosphorylated RNA, leading to a more labile monophosphorylated state that can stimulate subsequent ribonuclease cleavage. The sequence is that of RNA pyrophosphohydrolase from Psychromonas ingrahamii (strain DSM 17664 / CCUG 51855 / 37).